Reading from the N-terminus, the 460-residue chain is Hydroxyproline dehydrogenase (460 aa).

Position 310 is an N6-acetyllysine (K310).

This sequence belongs to the proline oxidase family. FAD serves as cofactor.

It catalyses the reaction trans-4-hydroxy-L-proline + a quinone = (3R,5S)-1-pyrroline-3-hydroxy-5-carboxylate + a quinol + H(+). It carries out the reaction L-proline + a quinone = (S)-1-pyrroline-5-carboxylate + a quinol + H(+). Hydroproxyproline dehydrogenase activity is inhibited by THFA,(1R,3R)3-OH-cyclopentane-COOH and 5-OH-1H-pyrazole-3-COOH. In terms of biological role, dehydrogenase that converts trans-4-L-hydroxyproline to delta-1-pyrroline-3-hydroxy-5-carboxylate (Hyp) using ubiquinone-10 as the terminal electron acceptor. Can also use proline as a substrate but with a very much lower efficiency. Does not react with other diastereomers of Hyp: trans-4-D-hydroxyproline and cis-4-L-hydroxyproline. Ubiquininone analogs such as menadione, duroquinone and ubiquinone-1 react more efficiently than oxygen as the terminal electron acceptor during catalysis. The protein is Hydroxyproline dehydrogenase of Homo sapiens (Human).